The sequence spans 411 residues: Serine--tRNA ligase (411 aa).

Position 226–228 (threonine 226–glutamate 228) interacts with L-serine. Arginine 257–glutamate 259 is an ATP binding site. Residue glutamate 280 participates in L-serine binding. Glutamate 344–serine 347 is a binding site for ATP. Serine 379 serves as a coordination point for L-serine.

This sequence belongs to the class-II aminoacyl-tRNA synthetase family. Type-1 seryl-tRNA synthetase subfamily. As to quaternary structure, homodimer. The tRNA molecule binds across the dimer.

It localises to the cytoplasm. The catalysed reaction is tRNA(Ser) + L-serine + ATP = L-seryl-tRNA(Ser) + AMP + diphosphate + H(+). The enzyme catalyses tRNA(Sec) + L-serine + ATP = L-seryl-tRNA(Sec) + AMP + diphosphate + H(+). It functions in the pathway aminoacyl-tRNA biosynthesis; selenocysteinyl-tRNA(Sec) biosynthesis; L-seryl-tRNA(Sec) from L-serine and tRNA(Sec): step 1/1. In terms of biological role, catalyzes the attachment of serine to tRNA(Ser). Is also able to aminoacylate tRNA(Sec) with serine, to form the misacylated tRNA L-seryl-tRNA(Sec), which will be further converted into selenocysteinyl-tRNA(Sec). The sequence is that of Serine--tRNA ligase from Campylobacter jejuni subsp. jejuni serotype O:23/36 (strain 81-176).